A 524-amino-acid polypeptide reads, in one-letter code: MSDPLIKRALVSVSDKTGIVDFCRELSSLGVEIFSTGGTLKALQDSGVKAASISLITGFPEIMDGRVKTLHPKIHGGLLAVRDNADHVAQAVENGIGFIDMVVVNLYPFEATVARPGVSFEDAIENIDIGGPSMLRSAAKNNESVTVLTDSADYPCVLAEMRSSGGRTTRATRLRLARQVFQLTSRYDGAIARYLTGAEGAAPAAAETMTVKLERELDMRYGENPHQSAGFYTLTDGEGTRSFGDYFEKLHGKELSYNNMLDIAAASGLVEEFRGEEPSVVIIKHTNPCGVAQAPTLVEAWHNAFATDTQAPFGGIIAFNRPLDMVTAEAVNGIFTEILIAPSYEEGVLDLLMKKKDRRLLVQKQALPKGGWEFKSTPFGMLVQERDSKIVAREDLNVVTKRQPTEEELGDLMFAWKICKHIKSNTILYVKNRRTFGVGAGQMSRVDSSKIARWKASEVNLDLHGSVVASDAFFPFADGLLAAAEAGVTAVIQPGGSIRDNEVIEAADANNLAMVFTGMRHFKH.

The MGS-like domain maps to 1–149 (MSDPLIKRAL…KNNESVTVLT (149 aa)).

The protein belongs to the PurH family.

The catalysed reaction is (6R)-10-formyltetrahydrofolate + 5-amino-1-(5-phospho-beta-D-ribosyl)imidazole-4-carboxamide = 5-formamido-1-(5-phospho-D-ribosyl)imidazole-4-carboxamide + (6S)-5,6,7,8-tetrahydrofolate. It catalyses the reaction IMP + H2O = 5-formamido-1-(5-phospho-D-ribosyl)imidazole-4-carboxamide. Its pathway is purine metabolism; IMP biosynthesis via de novo pathway; 5-formamido-1-(5-phospho-D-ribosyl)imidazole-4-carboxamide from 5-amino-1-(5-phospho-D-ribosyl)imidazole-4-carboxamide (10-formyl THF route): step 1/1. It functions in the pathway purine metabolism; IMP biosynthesis via de novo pathway; IMP from 5-formamido-1-(5-phospho-D-ribosyl)imidazole-4-carboxamide: step 1/1. The polypeptide is Bifunctional purine biosynthesis protein PurH (Chlorobium luteolum (strain DSM 273 / BCRC 81028 / 2530) (Pelodictyon luteolum)).